Here is a 149-residue protein sequence, read N- to C-terminus: FAD synthase (149 aa).

Residues 15-16, 20-23, and Asp-101 each bind ATP; these read VF and HVGH.

Belongs to the archaeal FAD synthase family. As to quaternary structure, homodimer. It depends on a divalent metal cation as a cofactor.

The enzyme catalyses FMN + ATP + H(+) = FAD + diphosphate. The protein operates within cofactor biosynthesis; FAD biosynthesis; FAD from FMN: step 1/1. Its function is as follows. Catalyzes the transfer of the AMP portion of ATP to flavin mononucleotide (FMN) to produce flavin adenine dinucleotide (FAD) coenzyme. In Thermococcus kodakarensis (strain ATCC BAA-918 / JCM 12380 / KOD1) (Pyrococcus kodakaraensis (strain KOD1)), this protein is FAD synthase.